The following is a 399-amino-acid chain: Multi-drug resistance efflux pump PmrA (399 aa).

10 helical membrane-spanning segments follow: residues 12–34, 49–71, 84–106, 140–162, 167–186, 217–239, 248–270, 306–328, 340–362, and 366–388; these read IAWFGNFLTGASISLVVPFMPIF, AGLAISVSAISAALFSPIWGILA, GLAMTITMGGLAFVPNIYWLIFL, LSTGVVAGTLTGPFIGGFIAELF, VFLLVGSFLFLAAILTICFI, LFLTSFVIQFSAQSIGPILALYV, LLFVSGLIVSSMGFSSMMSAGVM, LGLYRFLFGLGTGALIPGVNALL, VFAFNQVFFYLGGVVGPMAGSAV, and FGYHAVFYATSLCVAFSCLFNLI.

Belongs to the major facilitator superfamily. TCR/Tet family.

Its subcellular location is the cell membrane. In terms of biological role, efflux pump for various substrates. This is Multi-drug resistance efflux pump PmrA (pmrA) from Streptococcus pneumoniae serotype 4 (strain ATCC BAA-334 / TIGR4).